The following is a 332-amino-acid chain: Ferredoxin--NADP reductase 1 (332 aa).

The FAD site is built by D35, K43, F48, V88, F123, D284, and T325.

Belongs to the ferredoxin--NADP reductase type 2 family. Homodimer. The cofactor is FAD.

It catalyses the reaction 2 reduced [2Fe-2S]-[ferredoxin] + NADP(+) + H(+) = 2 oxidized [2Fe-2S]-[ferredoxin] + NADPH. In Listeria innocua serovar 6a (strain ATCC BAA-680 / CLIP 11262), this protein is Ferredoxin--NADP reductase 1.